The sequence spans 1174 residues: HEAT repeat-containing protein 6 (1174 aa).

One copy of the HEAT 1 repeat lies at 168 to 207; it reads NELLGPTGILVNLCDPSQPDPELWREAIHCMANLCLGVPG. 2 disordered regions span residues 304-346 and 373-392; these read GRSP…EELK and LGPQ…KDHF. Positions 323–335 are enriched in basic residues; the sequence is SKKKRKAGKQKKG. Residues 336–346 are compositionally biased toward basic and acidic residues; it reads HQGEESKEELK. HEAT repeat units lie at residues 460–498, 523–560, and 566–603; these read GIGS…GSKQ, SIRE…NAPY, and GLLT…AQVS. Residues 619–648 form a disordered region; sequence SQNSGSATPSDPESNRKESMLEGGKKNGLH. The segment covering 631–648 has biased composition (basic and acidic residues); sequence ESNRKESMLEGGKKNGLH.

The sequence is that of HEAT repeat-containing protein 6 (heatr6) from Xenopus laevis (African clawed frog).